A 170-amino-acid chain; its full sequence is uncharacterized protein (170 aa).

This is an uncharacterized protein from Bacillus subtilis (strain 168).